The primary structure comprises 727 residues: Probable glutamate carboxypeptidase ARB_02390 (727 aa).

An N-terminal signal peptide occupies residues M1–G18. N-linked (GlcNAc...) asparagine glycosylation is found at N60 and N80. The region spanning A158–L296 is the PA domain. R197 contacts substrate. N223 carries an N-linked (GlcNAc...) asparagine glycan. The segment at F255 to V279 is disordered. Ca(2+)-binding residues include T261 and Y264. An NAALADase region spans residues S266–L565. Residues N310, N319, and N353 are each glycosylated (N-linked (GlcNAc...) asparagine). H366 provides a ligand contact to Zn(2+). The active-site For NAALADase activity is E414. Zn(2+) is bound at residue E415. Positions 423 and 426 each coordinate Ca(2+). D443 provides a ligand contact to Zn(2+). Substrate contacts are provided by residues T516 to A518 and Y530. Position 531 (H531) interacts with Zn(2+). S604 serves as the catalytic Charge relay system. N-linked (GlcNAc...) asparagine glycosylation is present at N614. H665 functions as the Charge relay system in the catalytic mechanism. Substrate is bound at residue G675–Y676. N692 carries N-linked (GlcNAc...) asparagine glycosylation.

Belongs to the peptidase M28 family. M28B subfamily. The cofactor is Zn(2+).

It localises to the secreted. The catalysed reaction is Release of an unsubstituted, C-terminal glutamyl residue, typically from Ac-Asp-Glu or folylpoly-gamma-glutamates.. Functionally, has both folate hydrolase and N-acetylated-alpha-linked-acidic dipeptidase (NAALADase) activity. Also exhibits a dipeptidyl-peptidase IV type activity. This chain is Probable glutamate carboxypeptidase ARB_02390, found in Arthroderma benhamiae (strain ATCC MYA-4681 / CBS 112371) (Trichophyton mentagrophytes).